The chain runs to 501 residues: MLPPKIFFEKFKEIIWPIERKELKLFIPMALMMLCILFNFGALRSIKDSLVVPSMGAEIISFLKLWLVLPSCVIFTVLYVKLSNKLNFEYIFYSIVGTFLLFFLLFAYIIYPNQDIYHPNDAMINNLIASYPNLKWFIKIGSKWSYALMYIFSELWSAVVINLMFWQFANHIFDTAKAKRFYPVLGMIGNIGLIIAGSVLVFFSSGQYIIDSELLTDSFNSSSCNSIILQPIISIIVTAGIIAMFLFRIINRFILTNAINVLDVKKAAARTKTKLALIESIKLIIHSKYIGRIALLIICYGLLINIVEGPWKAKIKELHPNTIDYVNFMGMFNIWMGISCVTFMIIGSNILRRLGWLISALLTPIMLSITGFIFFIFIIFIEEIGTCFGDFNLLYVAIIVGAIQNILSKSSKYSLFDSTKEMAYIPLSLELRTKGKAAVEVIGTKFGKSLGAFIQSLIFIIIPTATFDSIIIYLLVIFIVMMNLWIWNIIKLNKEYIKLCK.

Transmembrane regions (helical) follow at residues 23–43 (LKLF…FGAL), 59–79 (IISF…TVLY), 90–110 (YIFY…AYII), 146–166 (YALM…LMFW), 183–203 (PVLG…LVFF), 227–247 (IILQ…MFLF), 293–313 (IALL…PWKA), 326–346 (VNFM…FMII), 361–381 (LLTP…IIFI), 383–403 (EIGT…VGAI), 446–466 (FGKS…PTAT), and 470–490 (IIIY…WNII).

The protein belongs to the ADP/ATP translocase tlc family.

It localises to the cell membrane. In terms of biological role, provides the rickettsial cell with host ATP in exchange for rickettsial ADP. This is an obligate exchange system. This energy acquiring activity is an important component of rickettsial parasitism. This is ADP,ATP carrier protein 3 (tlcC) from Rickettsia typhi (strain ATCC VR-144 / Wilmington).